The following is a 64-amino-acid chain: Toxin BmCa-1 (64 aa).

The N-terminal stretch at 1 to 18 is a signal peptide; that stretch reads MNTFVVVFLLLTAILCHA. Positions 19 to 27 are excised as a propeptide; sequence EHALDETAR. Cystine bridges form between C29–C43, C36–C49, and C42–C58.

Belongs to the scorpion calcin-like family. In terms of tissue distribution, expressed by the venom gland.

The protein resides in the secreted. Functionally, may increase intracellular calcium release through the activation of nuclear inositol 1,4,5-trisphosphate receptors (ITPR) of cardiomyocytes, thereby causing an increase in the contraction frequency of these cells. The sequence is that of Toxin BmCa-1 from Olivierus martensii (Manchurian scorpion).